Consider the following 525-residue polypeptide: ADP-ribosylation factor GTPase-activating protein 3 (525 aa).

The 117-residue stretch at 10 to 126 (LAIFKRLRSV…IKTLATQATR (117 aa)) folds into the Arf-GAP domain. The segment at 25-48 (CFDCGAKNPSWASISYGVFLCIDC) adopts a C4-type zinc-finger fold. The disordered stretch occupies residues 160 to 233 (VSGATQASAQ…KGLGAKKGSL (74 aa)). Positions 162-177 (GATQASAQPEPASSTP) are enriched in polar residues. Residues 222–233 (AKKGLGAKKGSL) show a composition bias toward low complexity. A phosphoserine mark is found at S232, S242, S271, and S275. A disordered region spans residues 249–271 (QAQAVDKRKEQEDLARGTPKEES). Basic and acidic residues predominate over residues 293-305 (LNLSGQKKAEAER). Disordered regions lie at residues 293–364 (LNLS…SSSR) and 377–428 (FSSW…EAQK). A compositionally biased stretch (polar residues) spans 319–333 (HSVTSDMQTIEQESP). S332 carries the phosphoserine modification. The segment covering 349–363 (SYFSSSSKWSEQSSS) has biased composition (low complexity). S379 carries the phosphoserine modification. A compositionally biased stretch (basic and acidic residues) spans 387 to 398 (YWKKDSSRDPEP). Phosphoserine occurs at positions 437, 460, 462, 464, 466, and 467.

It localises to the cytoplasm. The protein resides in the golgi apparatus membrane. GAP activity stimulated by phosphatidylinositol 4,5-bisphosphate (PIP2). GTPase-activating protein (GAP) for ADP ribosylation factor 1 (ARF1). Hydrolysis of ARF1-bound GTP may lead to dissociation of coatomer from Golgi-derived membranes to allow fusion with target membranes. This Rattus norvegicus (Rat) protein is ADP-ribosylation factor GTPase-activating protein 3.